The sequence spans 429 residues: Enolase (429 aa).

(2R)-2-phosphoglycerate is bound at residue glutamine 162. Glutamate 204 (proton donor) is an active-site residue. Residues aspartate 241, glutamate 283, and aspartate 310 each coordinate Mg(2+). Residues lysine 335, arginine 364, serine 365, and lysine 386 each contribute to the (2R)-2-phosphoglycerate site. Lysine 335 (proton acceptor) is an active-site residue.

The protein belongs to the enolase family. Requires Mg(2+) as cofactor.

The protein localises to the cytoplasm. The protein resides in the secreted. It localises to the cell surface. It catalyses the reaction (2R)-2-phosphoglycerate = phosphoenolpyruvate + H2O. Its pathway is carbohydrate degradation; glycolysis; pyruvate from D-glyceraldehyde 3-phosphate: step 4/5. Catalyzes the reversible conversion of 2-phosphoglycerate (2-PG) into phosphoenolpyruvate (PEP). It is essential for the degradation of carbohydrates via glycolysis. In Mycobacterium bovis (strain BCG / Pasteur 1173P2), this protein is Enolase.